Reading from the N-terminus, the 458-residue chain is Probable plasmid replicative DNA helicase (458 aa).

In terms of domain architecture, SF4 helicase spans 194-458 (KIDYVDGLPT…GKFTIQKEAW (265 aa)). 225–232 (ARPAMGKT) provides a ligand contact to ATP.

It belongs to the helicase family. DnaB subfamily. In terms of assembly, homohexamer.

The enzyme catalyses Couples ATP hydrolysis with the unwinding of duplex DNA at the replication fork by translocating in the 5'-3' direction. This creates two antiparallel DNA single strands (ssDNA). The leading ssDNA polymer is the template for DNA polymerase III holoenzyme which synthesizes a continuous strand.. It catalyses the reaction ATP + H2O = ADP + phosphate + H(+). Its function is as follows. A replicative DNA helicase, it participates in initiation and elongation during DNA replication. Travels ahead of the DNA replisome, separating dsDNA into templates for DNA synthesis. A processive ATP-dependent 5'-3' DNA helicase it has DNA-dependent ATPase activity. This Chlamydia psittaci (Chlamydophila psittaci) protein is Probable plasmid replicative DNA helicase.